The following is a 316-amino-acid chain: Small ribosomal subunit protein RACK1 (316 aa).

WD repeat units follow at residues 4–46, 52–93, 94–135, 137–180, 181–221, 222–263, and 264–312; these read QMTL…WRLT, YGVP…WDLS, TGQT…WNTL, VCKY…WNLT, NCKL…LWDL, NEGK…WDLE, and GKVV…WQVS.

This sequence belongs to the WD repeat G protein beta family. Ribosomal protein RACK1 subfamily.

This is Small ribosomal subunit protein RACK1 from Biomphalaria glabrata (Bloodfluke planorb).